The chain runs to 331 residues: Endo-1,4-beta-xylanase 2 (331 aa).

Residues 1 to 17 form the signal peptide; the sequence is MKASSVLLGLAPLAALA. The GH10 domain maps to 31–329; sequence QQSIDALMKA…KPAYNSVVQA (299 aa). N-linked (GlcNAc...) asparagine glycosylation occurs at asparagine 105. The active-site Proton donor is the glutamate 159. Glutamate 266 acts as the Nucleophile in catalysis. An intrachain disulfide couples cysteine 284 to cysteine 290. A glycan (N-linked (GlcNAc...) asparagine) is linked at asparagine 301.

The protein belongs to the glycosyl hydrolase 10 (cellulase F) family.

It is found in the secreted. The catalysed reaction is Endohydrolysis of (1-&gt;4)-beta-D-xylosidic linkages in xylans.. Its pathway is glycan degradation; xylan degradation. Endo-1,4-beta-xylanase involved in the hydrolysis of xylan, a major structural heterogeneous polysaccharide found in plant biomass representing the second most abundant polysaccharide in the biosphere, after cellulose. Accounts for approximately 70 percent of the endoxylanase activity in the culture filtrate. The polypeptide is Endo-1,4-beta-xylanase 2 (XYL2) (Pyricularia grisea (Crabgrass-specific blast fungus)).